We begin with the raw amino-acid sequence, 121 residues long: Large ribosomal subunit protein eL8 (121 aa).

It belongs to the eukaryotic ribosomal protein eL8 family. As to quaternary structure, part of the 50S ribosomal subunit. Probably part of the RNase P complex.

It localises to the cytoplasm. In terms of biological role, multifunctional RNA-binding protein that recognizes the K-turn motif in ribosomal RNA, the RNA component of RNase P, box H/ACA, box C/D and box C'/D' sRNAs. The protein is Large ribosomal subunit protein eL8 of Thermoplasma volcanium (strain ATCC 51530 / DSM 4299 / JCM 9571 / NBRC 15438 / GSS1).